Reading from the N-terminus, the 756-residue chain is Neutral ceramidase (756 aa).

The Cytoplasmic segment spans residues 1–11 (MAKRTFSTLEA). A helical; Signal-anchor for type II membrane protein transmembrane segment spans residues 12–32 (FLIFLLVIMTVITVALLTLLF). Residues 33-756 (VTSGTIENHK…ISSPFEVVTT (724 aa)) are Lumenal-facing. O-linked (GalNAc...) threonine glycosylation is found at Thr-56, Thr-57, Thr-58, and Thr-64. Leu-110 provides a ligand contact to Ca(2+). His-170 contacts Zn(2+). The N-linked (GlcNAc...) asparagine glycan is linked to Asn-193. His-279 is a Zn(2+) binding site. Ser-330 (nucleophile) is an active-site residue. Cystine bridges form between Cys-338–Cys-352 and Cys-345–Cys-360. N-linked (GlcNAc...) asparagine glycans are attached at residues Asn-407 and Asn-444. A disulfide bridge links Cys-424 with Cys-474. Zn(2+)-binding residues include Glu-516 and Tyr-555. 3 residues coordinate Ca(2+): Asp-688, Ser-690, and Thr-693. A required for correct folding and localization region spans residues 746-756 (GISSPFEVVTT).

The protein belongs to the neutral ceramidase family. As to quaternary structure, may interact with CAV1. Zn(2+) is required as a cofactor. In terms of processing, proteolytic cleavage of the N-terminus removes the signal-anchor and produces a soluble form of the protein. N-glycosylated. Required for enzyme activity. Post-translationally, O-glycosylated. Required to retain it as a type II membrane protein at the cell surface. In terms of processing, phosphorylated. May prevent ubiquitination and subsequent degradation. Ubiquitinated, leading to its degradation by the proteasome. Ubiquitination is triggered by nitric oxide. In terms of tissue distribution, widely expressed. Strongly expressed in small intestine and to a lower extent in liver and kidney. Highly expressed in duodenum, jejunum and ileum along the brush border of the small intestine (at protein level).

The protein resides in the cell membrane. It is found in the membrane raft. Its subcellular location is the membrane. The protein localises to the caveola. It localises to the golgi apparatus membrane. The protein resides in the mitochondrion. It is found in the secreted. Its subcellular location is the extracellular exosome. The enzyme catalyses an N-acylsphing-4-enine + H2O = sphing-4-enine + a fatty acid. The catalysed reaction is N-hexadecanoylsphing-4-enine + H2O = sphing-4-enine + hexadecanoate. It catalyses the reaction N-dodecanoylsphing-4-enine + H2O = dodecanoate + sphing-4-enine. It carries out the reaction N-octadecanoylsphing-4-enine + H2O = sphing-4-enine + octadecanoate. The enzyme catalyses N-octanoylsphing-4-enine + H2O = octanoate + sphing-4-enine. The catalysed reaction is N-(hexanoyl)sphing-4-enine + H2O = hexanoate + sphing-4-enine. It catalyses the reaction N-tetradecanoylsphing-4-enine + H2O = tetradecanoate + sphing-4-enine. It carries out the reaction N-(9Z-octadecenoyl)-sphing-4-enine + H2O = sphing-4-enine + (9Z)-octadecenoate. The enzyme catalyses N-(15Z-tetracosenoyl)-sphing-4-enine + H2O = (15Z)-tetracosenoate + sphing-4-enine. The catalysed reaction is sphinganine + hexadecanoate = N-hexadecanoylsphinganine + H2O. It catalyses the reaction N-(octadecanoyl)-sphinganine + H2O = sphinganine + octadecanoate. It functions in the pathway lipid metabolism; sphingolipid metabolism. Its activity is regulated as follows. Inhibited by D-erythro-MAPP. Functionally, plasma membrane ceramidase that hydrolyzes sphingolipid ceramides into sphingosine and free fatty acids at neutral pH. Ceramides, sphingosine, and its phosphorylated form sphingosine-1-phosphate are bioactive lipids that mediate cellular signaling pathways regulating several biological processes including cell proliferation, apoptosis and differentiation. Also catalyzes the reverse reaction allowing the synthesis of ceramides from fatty acids and sphingosine. Together with sphingomyelinase, participates in the production of sphingosine and sphingosine-1-phosphate from the degradation of sphingomyelin, a sphingolipid enriched in the plasma membrane of cells. Also participates in the hydrolysis of ceramides from the extracellular milieu allowing the production of sphingosine-1-phosphate inside and outside cells. This is the case for instance with the digestion of dietary sphingolipids in the intestinal tract. The chain is Neutral ceramidase (Asah2) from Mus musculus (Mouse).